The sequence spans 194 residues: Dephospho-CoA kinase (194 aa).

The 192-residue stretch at 3-194 (IVGLTGSIGM…RAIVDDLRAG (192 aa)) folds into the DPCK domain. 11 to 16 (GMGKST) is an ATP binding site.

The protein belongs to the CoaE family.

Its subcellular location is the cytoplasm. The enzyme catalyses 3'-dephospho-CoA + ATP = ADP + CoA + H(+). It functions in the pathway cofactor biosynthesis; coenzyme A biosynthesis; CoA from (R)-pantothenate: step 5/5. Functionally, catalyzes the phosphorylation of the 3'-hydroxyl group of dephosphocoenzyme A to form coenzyme A. The sequence is that of Dephospho-CoA kinase from Rhizobium meliloti (strain 1021) (Ensifer meliloti).